The chain runs to 266 residues: Thymidylate synthase (266 aa).

Arg24 contributes to the dUMP binding site. His54 contributes to the (6R)-5,10-methylene-5,6,7,8-tetrahydrofolate binding site. 129-130 (RR) lines the dUMP pocket. The Nucleophile role is filled by Cys149. DUMP is bound by residues 169-172 (RSAD), Asn180, and 210-212 (HIY). Asp172 is a binding site for (6R)-5,10-methylene-5,6,7,8-tetrahydrofolate. (6R)-5,10-methylene-5,6,7,8-tetrahydrofolate is bound at residue Ala265.

It belongs to the thymidylate synthase family. Bacterial-type ThyA subfamily. In terms of assembly, homodimer.

It localises to the cytoplasm. It carries out the reaction dUMP + (6R)-5,10-methylene-5,6,7,8-tetrahydrofolate = 7,8-dihydrofolate + dTMP. Its pathway is pyrimidine metabolism; dTTP biosynthesis. Its function is as follows. Catalyzes the reductive methylation of 2'-deoxyuridine-5'-monophosphate (dUMP) to 2'-deoxythymidine-5'-monophosphate (dTMP) while utilizing 5,10-methylenetetrahydrofolate (mTHF) as the methyl donor and reductant in the reaction, yielding dihydrofolate (DHF) as a by-product. This enzymatic reaction provides an intracellular de novo source of dTMP, an essential precursor for DNA biosynthesis. The chain is Thymidylate synthase from Mycobacterium bovis (strain ATCC BAA-935 / AF2122/97).